A 418-amino-acid polypeptide reads, in one-letter code: Serine hydroxymethyltransferase (418 aa).

(6S)-5,6,7,8-tetrahydrofolate is bound by residues L121 and 125–127 (GHL). At K230 the chain carries N6-(pyridoxal phosphate)lysine. 355 to 357 (SPF) is a (6S)-5,6,7,8-tetrahydrofolate binding site.

Belongs to the SHMT family. In terms of assembly, homodimer. The cofactor is pyridoxal 5'-phosphate.

The protein localises to the cytoplasm. The enzyme catalyses (6R)-5,10-methylene-5,6,7,8-tetrahydrofolate + glycine + H2O = (6S)-5,6,7,8-tetrahydrofolate + L-serine. Its pathway is one-carbon metabolism; tetrahydrofolate interconversion. It participates in amino-acid biosynthesis; glycine biosynthesis; glycine from L-serine: step 1/1. In terms of biological role, catalyzes the reversible interconversion of serine and glycine with tetrahydrofolate (THF) serving as the one-carbon carrier. This reaction serves as the major source of one-carbon groups required for the biosynthesis of purines, thymidylate, methionine, and other important biomolecules. Also exhibits THF-independent aldolase activity toward beta-hydroxyamino acids, producing glycine and aldehydes, via a retro-aldol mechanism. The protein is Serine hydroxymethyltransferase of Streptococcus pyogenes serotype M49 (strain NZ131).